The primary structure comprises 608 residues: Growth hormone receptor (608 aa).

The signal sequence occupies residues 1-16; sequence MDLRHLLFTLALVCAN. At 17–237 the chain is on the extracellular side; it reads DSLSASDDLL…EFVHCAEEIE (221 aa). 2 disulfides stabilise this stretch: cysteine 34–cysteine 44 and cysteine 72–cysteine 83. Asparagine 86 carries an N-linked (GlcNAc...) asparagine glycan. Residues cysteine 97 and cysteine 111 are joined by a disulfide bond. The 105-residue stretch at 122-226 folds into the Fibronectin type-III domain; that stretch reads PPVHLNWTLL…ILYVSFTQAG (105 aa). Asparagine 127, asparagine 132, and asparagine 171 each carry an N-linked (GlcNAc...) asparagine glycan. The WSXWS motif signature appears at 211–215; that stretch reads FGEFS. A helical membrane pass occupies residues 238–261; sequence FPWFLVVVFGVCGLAVTAILILLS. The Cytoplasmic portion of the chain corresponds to 262 to 608; that stretch reads KQPRLKMLIF…STDQLNKIMP (347 aa). Residues 267 to 352 are required for JAK2 binding; it reads KMLIFPPVPV…HLKSHSCLGA (86 aa). Residues 270-278 carry the Box 1 motif motif; the sequence is IFPPVPVPK. The short motif at 313–322 is the UbE motif element; sequence DLWVEFIELD. Composition is skewed to polar residues over residues 413-426 and 438-451; these read ANTD…STQS and STDS…TQLS. Positions 413 to 451 are disordered; the sequence is ANTDTQQPHTSTQSESRESWPPFADSTDSANPSVQTQLS.

It belongs to the type I cytokine receptor family. Type 1 subfamily. Post-translationally, on GH binding, proteolytically cleaved, in vitro, to produce GHBP. In terms of tissue distribution, broad specificity.

Its subcellular location is the cell membrane. The protein localises to the secreted. In terms of biological role, receptor for pituitary gland growth hormone (GH1) involved in regulating postnatal body growth. On ligand binding, couples to the JAK2/STAT5 pathway. Functionally, the soluble form (GHBP) acts as a reservoir of growth hormone in plasma and may be a modulator/inhibitor of GH signaling. The protein is Growth hormone receptor (GHR) of Gallus gallus (Chicken).